Reading from the N-terminus, the 572-residue chain is E3 ubiquitin-protein ligase ZFP91 (572 aa).

Basic and acidic residues predominate over residues 1–12; that stretch reads MPGETEEPRSPE. The interval 1-308 is disordered; it reads MPGETEEPRS…PRLPKRRKKP (308 aa). The segment covering 61-70 has biased composition (low complexity); it reads AAAAAAAAAA. A compositionally biased stretch (basic residues) spans 72–85; sequence SRRRKAEYPRRRRS. S86 and S106 each carry phosphoserine. Residues 122–131 are compositionally biased toward basic and acidic residues; the sequence is LTTDKDPKEE. The segment covering 143–162 has biased composition (low complexity); that stretch reads SITTTRASRSWRSSSRTSIS. A compositionally biased stretch (acidic residues) spans 209 to 225; it reads SDEEEEEEEEMLISEEE. Basic and acidic residues-rich tracts occupy residues 226-247 and 254-271; these read IPFK…ETPK and KVKE…VEVE. Over residues 272–284 the composition is skewed to acidic residues; it reads VKEEENEIREDEE. 5 C2H2-type zinc fingers span residues 313–338, 344–368, 374–396, 402–424, and 432–455; these read VRCE…KYQH, YVCP…AKHH, YICE…RMIH, LQCE…MKKH, and FSCN…AKSH. The segment at 340 to 370 is interaction with MAP3K14/NIK; the sequence is LKKKYVCPHPSCGRLFRLQKQLLRHAKHHTD.

It belongs to the krueppel C2H2-type zinc-finger protein family. Interacts with MAP3K14/NIK. In terms of tissue distribution, found in all the examined tissues including brain, heart, kidney, lung, liver, spleen, thymus, skeletal muscle, ovary and testis.

The protein resides in the nucleus. The catalysed reaction is S-ubiquitinyl-[E2 ubiquitin-conjugating enzyme]-L-cysteine + [acceptor protein]-L-lysine = [E2 ubiquitin-conjugating enzyme]-L-cysteine + N(6)-ubiquitinyl-[acceptor protein]-L-lysine.. It participates in protein modification; protein ubiquitination. Functionally, atypical E3 ubiquitin-protein ligase that mediates 'Lys-63'-linked ubiquitination of MAP3K14/NIK, leading to stabilize and activate MAP3K14/NIK. It thereby acts as an activator of the non-canonical NF-kappa-B2/NFKB2 pathway. May also play an important role in cell proliferation and/or anti-apoptosis. The polypeptide is E3 ubiquitin-protein ligase ZFP91 (Zfp91) (Mus musculus (Mouse)).